The primary structure comprises 617 residues: DNA mismatch repair protein MutL (617 aa).

It belongs to the DNA mismatch repair MutL/HexB family.

This protein is involved in the repair of mismatches in DNA. It is required for dam-dependent methyl-directed DNA mismatch repair. May act as a 'molecular matchmaker', a protein that promotes the formation of a stable complex between two or more DNA-binding proteins in an ATP-dependent manner without itself being part of a final effector complex. The sequence is that of DNA mismatch repair protein MutL from Christiangramia forsetii (strain DSM 17595 / CGMCC 1.15422 / KT0803) (Gramella forsetii).